A 459-amino-acid polypeptide reads, in one-letter code: FBD-associated F-box protein At5g27750 (459 aa).

The F-box domain maps to 4–50; that stretch reads FDRISELPESLITQILLCLPTKDSVKTSVLSTRWKNLWLNVPGLDLT. One can recognise an FBD domain in the interval 374–426; that stretch reads TEELNLINVPRCIVSTLECVEIKGLFEWEEEEMKIARYFLENAAVLKKLTMSF.

The chain is FBD-associated F-box protein At5g27750 from Arabidopsis thaliana (Mouse-ear cress).